Reading from the N-terminus, the 513-residue chain is Probable vesicular acetylcholine transporter-A (513 aa).

At 1-39 (MATEESGGLAQTAAVKLSEMGERTKQLGNAIQDPERQRR) the chain is on the cytoplasmic side. A helical membrane pass occupies residues 40–60 (IILVIVCVALLLDNMLYMVIV). The Lumenal, vesicle portion of the chain corresponds to 61–98 (PIVPDYLAHLESESEQAHVKGNSSINITQNENFDLQIG). 2 N-linked (GlcNAc...) asparagine glycosylation sites follow: N82 and N86. Residues 99–119 (VLFASKAILQLLVNPLTGTFI) traverse the membrane as a helical segment. At 120–125 (DRVGYD) the chain is on the cytoplasmic side. A helical membrane pass occupies residues 126–146 (IPLLIGLSIMFVSTCIFAFAE). Residues 147-156 (NYATLFMARS) are Lumenal, vesicle-facing. A helical transmembrane segment spans residues 157-174 (LQGLGSAFADTSGIAMIA). At 175–186 (DKYAEESERSRA) the chain is on the cytoplasmic side. The helical transmembrane segment at 187 to 207 (LGIALAFISFGSLAAPPFGGV) threads the bilayer. Residues 208 to 215 (LYEFAGKR) lie on the Lumenal, vesicle side of the membrane. Residues 216–236 (FPFIALACVCLADGILCLTVL) form a helical membrane-spanning segment. Topologically, residues 237–257 (KPFSSRTRENMPVGTPIYKLM) are cytoplasmic. Residues 258 to 278 (IDPYIAVVAGALTTCNIPLAF) traverse the membrane as a helical segment. At 279-296 (LEPTIANWMEETMNASQW) the chain is on the lumenal, vesicle side. N292 carries an N-linked (GlcNAc...) asparagine glycan. The chain crosses the membrane as a helical span at residues 297–317 (QIGITWLPAFFPHILGVYLTV). Residues 318–327 (KLAAKYPHLQ) lie on the Cytoplasmic side of the membrane. The chain crosses the membrane as a helical span at residues 328–348 (WFYGALGMVIIGASSCIVPAC). Over 349–353 (KNFEQ) the chain is Lumenal, vesicle. Residues 354-374 (LIIPLCGVCFGIALVDTALLP) form a helical membrane-spanning segment. Residues 375–390 (TLAFLVDVRHVSVYGS) are Cytoplasmic-facing. The chain crosses the membrane as a helical span at residues 391–411 (VYAIADISYCVAYALGPIVAG). At 412–418 (KIVHDLG) the chain is on the lumenal, vesicle side. Residues 419-439 (FVQLNLGMGLANVLYAPALLL) traverse the membrane as a helical segment. Topologically, residues 440-513 (LRNVSLMKPS…EEETSEPEYI (74 aa)) are cytoplasmic. Residues 475 to 513 (RKKHGYSSSGNCVPIDENGTFAGQSKSFSEEETSEPEYI) form a disordered region. A compositionally biased stretch (acidic residues) spans 504–513 (EEETSEPEYI).

This sequence belongs to the major facilitator superfamily. Vesicular transporter family.

Its subcellular location is the membrane. Functionally, involved in acetylcholine transport into synaptic vesicles. This Danio rerio (Zebrafish) protein is Probable vesicular acetylcholine transporter-A.